The primary structure comprises 228 residues: L-ribulose-5-phosphate 4-epimerase UlaF (228 aa).

Substrate is bound by residues 26–27 (GN), 43–44 (SG), and 72–73 (SS). Zn(2+) contacts are provided by aspartate 74, histidine 93, and histidine 95. The active-site Proton donor/acceptor is the aspartate 118. Zn(2+) is bound at residue histidine 167. The active-site Proton donor/acceptor is tyrosine 225.

It belongs to the aldolase class II family. AraD/FucA subfamily. Zn(2+) serves as cofactor.

It carries out the reaction L-ribulose 5-phosphate = D-xylulose 5-phosphate. It participates in cofactor degradation; L-ascorbate degradation; D-xylulose 5-phosphate from L-ascorbate: step 4/4. Functionally, catalyzes the isomerization of L-ribulose 5-phosphate to D-xylulose 5-phosphate. Is involved in the anaerobic L-ascorbate utilization. This Escherichia coli (strain ATCC 8739 / DSM 1576 / NBRC 3972 / NCIMB 8545 / WDCM 00012 / Crooks) protein is L-ribulose-5-phosphate 4-epimerase UlaF.